The chain runs to 219 residues: Ribosomal RNA small subunit methyltransferase G (219 aa).

Residues G78, F83, 129-130, and R146 contribute to the S-adenosyl-L-methionine site; that span reads GE.

This sequence belongs to the methyltransferase superfamily. RNA methyltransferase RsmG family.

The protein localises to the cytoplasm. The enzyme catalyses guanosine(527) in 16S rRNA + S-adenosyl-L-methionine = N(7)-methylguanosine(527) in 16S rRNA + S-adenosyl-L-homocysteine. Functionally, specifically methylates the N7 position of guanine in position 527 of 16S rRNA. The sequence is that of Ribosomal RNA small subunit methyltransferase G from Geotalea uraniireducens (strain Rf4) (Geobacter uraniireducens).